A 321-amino-acid polypeptide reads, in one-letter code: Aspartate carbamoyltransferase catalytic subunit (321 aa).

2 residues coordinate carbamoyl phosphate: Arg-65 and Thr-66. Lys-93 is a binding site for L-aspartate. Residues Arg-115, His-143, and Gln-146 each coordinate carbamoyl phosphate. Arg-176 and Arg-230 together coordinate L-aspartate. Carbamoyl phosphate-binding residues include Gly-271 and Pro-272.

It belongs to the aspartate/ornithine carbamoyltransferase superfamily. ATCase family. Heterododecamer (2C3:3R2) of six catalytic PyrB chains organized as two trimers (C3), and six regulatory PyrI chains organized as three dimers (R2).

The enzyme catalyses carbamoyl phosphate + L-aspartate = N-carbamoyl-L-aspartate + phosphate + H(+). It participates in pyrimidine metabolism; UMP biosynthesis via de novo pathway; (S)-dihydroorotate from bicarbonate: step 2/3. In terms of biological role, catalyzes the condensation of carbamoyl phosphate and aspartate to form carbamoyl aspartate and inorganic phosphate, the committed step in the de novo pyrimidine nucleotide biosynthesis pathway. The protein is Aspartate carbamoyltransferase catalytic subunit of Bartonella bacilliformis (strain ATCC 35685 / KC583 / Herrer 020/F12,63).